Here is a 266-residue protein sequence, read N- to C-terminus: 4-hydroxy-tetrahydrodipicolinate reductase (266 aa).

Residues 8 to 13 (GAAGRM) and Glu33 each bind NAD(+). Arg34 is an NADP(+) binding site. NAD(+) contacts are provided by residues 97–99 (GST) and 121–124 (APNM). His154 serves as the catalytic Proton donor/acceptor. His155 lines the (S)-2,3,4,5-tetrahydrodipicolinate pocket. Lys158 functions as the Proton donor in the catalytic mechanism. Position 164–165 (164–165 (GT)) interacts with (S)-2,3,4,5-tetrahydrodipicolinate.

Belongs to the DapB family.

It localises to the cytoplasm. It catalyses the reaction (S)-2,3,4,5-tetrahydrodipicolinate + NAD(+) + H2O = (2S,4S)-4-hydroxy-2,3,4,5-tetrahydrodipicolinate + NADH + H(+). The enzyme catalyses (S)-2,3,4,5-tetrahydrodipicolinate + NADP(+) + H2O = (2S,4S)-4-hydroxy-2,3,4,5-tetrahydrodipicolinate + NADPH + H(+). Its pathway is amino-acid biosynthesis; L-lysine biosynthesis via DAP pathway; (S)-tetrahydrodipicolinate from L-aspartate: step 4/4. Its function is as follows. Catalyzes the conversion of 4-hydroxy-tetrahydrodipicolinate (HTPA) to tetrahydrodipicolinate. This is 4-hydroxy-tetrahydrodipicolinate reductase from Geobacter sulfurreducens (strain ATCC 51573 / DSM 12127 / PCA).